We begin with the raw amino-acid sequence, 173 residues long: Crossover junction endodeoxyribonuclease RuvC (173 aa).

Active-site residues include Asp-8, Glu-67, and Asp-139. Positions 8, 67, and 139 each coordinate Mg(2+).

Belongs to the RuvC family. As to quaternary structure, homodimer which binds Holliday junction (HJ) DNA. The HJ becomes 2-fold symmetrical on binding to RuvC with unstacked arms; it has a different conformation from HJ DNA in complex with RuvA. In the full resolvosome a probable DNA-RuvA(4)-RuvB(12)-RuvC(2) complex forms which resolves the HJ. Requires Mg(2+) as cofactor.

The protein localises to the cytoplasm. It catalyses the reaction Endonucleolytic cleavage at a junction such as a reciprocal single-stranded crossover between two homologous DNA duplexes (Holliday junction).. The RuvA-RuvB-RuvC complex processes Holliday junction (HJ) DNA during genetic recombination and DNA repair. Endonuclease that resolves HJ intermediates. Cleaves cruciform DNA by making single-stranded nicks across the HJ at symmetrical positions within the homologous arms, yielding a 5'-phosphate and a 3'-hydroxyl group; requires a central core of homology in the junction. The consensus cleavage sequence is 5'-(A/T)TT(C/G)-3'. Cleavage occurs on the 3'-side of the TT dinucleotide at the point of strand exchange. HJ branch migration catalyzed by RuvA-RuvB allows RuvC to scan DNA until it finds its consensus sequence, where it cleaves and resolves the cruciform DNA. This is Crossover junction endodeoxyribonuclease RuvC from Shewanella putrefaciens (strain CN-32 / ATCC BAA-453).